Consider the following 235-residue polypeptide: 2-C-methyl-D-erythritol 4-phosphate cytidylyltransferase (235 aa).

Belongs to the IspD/TarI cytidylyltransferase family. IspD subfamily.

It catalyses the reaction 2-C-methyl-D-erythritol 4-phosphate + CTP + H(+) = 4-CDP-2-C-methyl-D-erythritol + diphosphate. It participates in isoprenoid biosynthesis; isopentenyl diphosphate biosynthesis via DXP pathway; isopentenyl diphosphate from 1-deoxy-D-xylulose 5-phosphate: step 2/6. In terms of biological role, catalyzes the formation of 4-diphosphocytidyl-2-C-methyl-D-erythritol from CTP and 2-C-methyl-D-erythritol 4-phosphate (MEP). This is 2-C-methyl-D-erythritol 4-phosphate cytidylyltransferase from Pseudomonas fluorescens (strain ATCC BAA-477 / NRRL B-23932 / Pf-5).